We begin with the raw amino-acid sequence, 187 residues long: Orotate phosphoribosyltransferase (187 aa).

Residues R103, K104, K107, and 129–137 (EDVTTSGGS) contribute to the 5-phospho-alpha-D-ribose 1-diphosphate site. The orotate site is built by T133 and R161.

Belongs to the purine/pyrimidine phosphoribosyltransferase family. PyrE subfamily. In terms of assembly, homodimer. Mg(2+) is required as a cofactor.

It catalyses the reaction orotidine 5'-phosphate + diphosphate = orotate + 5-phospho-alpha-D-ribose 1-diphosphate. It functions in the pathway pyrimidine metabolism; UMP biosynthesis via de novo pathway; UMP from orotate: step 1/2. Its function is as follows. Catalyzes the transfer of a ribosyl phosphate group from 5-phosphoribose 1-diphosphate to orotate, leading to the formation of orotidine monophosphate (OMP). The chain is Orotate phosphoribosyltransferase from Methanosarcina mazei (strain ATCC BAA-159 / DSM 3647 / Goe1 / Go1 / JCM 11833 / OCM 88) (Methanosarcina frisia).